The primary structure comprises 308 residues: GTP cyclohydrolase FolE2 (308 aa).

This sequence belongs to the GTP cyclohydrolase IV family.

It catalyses the reaction GTP + H2O = 7,8-dihydroneopterin 3'-triphosphate + formate + H(+). The protein operates within cofactor biosynthesis; 7,8-dihydroneopterin triphosphate biosynthesis; 7,8-dihydroneopterin triphosphate from GTP: step 1/1. In terms of biological role, converts GTP to 7,8-dihydroneopterin triphosphate. This Colwellia psychrerythraea (strain 34H / ATCC BAA-681) (Vibrio psychroerythus) protein is GTP cyclohydrolase FolE2.